Consider the following 182-residue polypeptide: Ribosome maturation factor RimM (182 aa).

The PRC barrel domain occupies E103–F182.

It belongs to the RimM family. Binds ribosomal protein uS19.

The protein localises to the cytoplasm. Its function is as follows. An accessory protein needed during the final step in the assembly of 30S ribosomal subunit, possibly for assembly of the head region. Essential for efficient processing of 16S rRNA. May be needed both before and after RbfA during the maturation of 16S rRNA. It has affinity for free ribosomal 30S subunits but not for 70S ribosomes. This chain is Ribosome maturation factor RimM, found in Vibrio campbellii (strain ATCC BAA-1116).